Consider the following 194-residue polypeptide: Endo-1,4-beta-xylanase (194 aa).

Gly1 carries the N-acetylglycine modification. In terms of domain architecture, GH11 spans 1-191 (GTTPNSEGWH…SSGYARITVA (191 aa)). Glu86 serves as the catalytic Nucleophile. An intrachain disulfide couples Cys110 to Cys154. Glu178 functions as the Proton donor in the catalytic mechanism.

This sequence belongs to the glycosyl hydrolase 11 (cellulase G) family.

The enzyme catalyses Endohydrolysis of (1-&gt;4)-beta-D-xylosidic linkages in xylans.. Its pathway is glycan degradation; xylan degradation. This is Endo-1,4-beta-xylanase from Byssochlamys spectabilis (Paecilomyces variotii).